The primary structure comprises 285 residues: 2-dehydro-3-deoxyphosphooctonate aldolase (285 aa).

This sequence belongs to the KdsA family.

It localises to the cytoplasm. It catalyses the reaction D-arabinose 5-phosphate + phosphoenolpyruvate + H2O = 3-deoxy-alpha-D-manno-2-octulosonate-8-phosphate + phosphate. Its pathway is carbohydrate biosynthesis; 3-deoxy-D-manno-octulosonate biosynthesis; 3-deoxy-D-manno-octulosonate from D-ribulose 5-phosphate: step 2/3. The protein operates within bacterial outer membrane biogenesis; lipopolysaccharide biosynthesis. This Acidovorax ebreus (strain TPSY) (Diaphorobacter sp. (strain TPSY)) protein is 2-dehydro-3-deoxyphosphooctonate aldolase.